We begin with the raw amino-acid sequence, 538 residues long: Growth factor receptor-bound protein 14 (538 aa).

A disordered region spans residues 1 to 20 (MTTSLQDGQSAAGRAGAQDS). Threonine 2 carries the N-acetylthreonine modification. The 87-residue stretch at 104 to 190 (KKQVIKVYSE…NKLYLRKNYA (87 aa)) folds into the Ras-associating domain. Residues 232 to 340 (YPEIHGFLHA…WVTAIRLLKD (109 aa)) enclose the PH domain. Phosphoserine occurs at positions 370 and 373. In terms of domain architecture, SH2 spans 437–533 (WFHHRISRDE…VLPCKLKHYC (97 aa)).

This sequence belongs to the GRB7/10/14 family. As to quaternary structure, interacts with the cytoplasmic domain of the autophosphorylated insulin receptor, through the SH2 domain. Interacts with GRB14 (via BPS domain); this interaction protects the tyrosines in the activation loop on INSR from dephosphorylation. Binds to the ankyrin repeat region of TNKS2 via its N-terminus. Interacts with activated NRAS. Interacts (via SH2 domain) with TEK/TIE2 (tyrosine phosphorylated). Phosphorylated on serine residues. Phosphorylated on tyrosine residues by TEK/TIE2.

Its subcellular location is the cytoplasm. The protein resides in the endosome membrane. Adapter protein which modulates coupling of cell surface receptor kinases with specific signaling pathways. Binds to, and suppresses signals from, the activated insulin receptor (INSR). Potent inhibitor of insulin-stimulated MAPK3 phosphorylation. Plays a critical role regulating PDPK1 membrane translocation in response to insulin stimulation and serves as an adapter protein to recruit PDPK1 to activated insulin receptor, thus promoting PKB/AKT1 phosphorylation and transduction of the insulin signal. The sequence is that of Growth factor receptor-bound protein 14 (Grb14) from Mus musculus (Mouse).